The primary structure comprises 430 residues: Glutamate-1-semialdehyde 2,1-aminomutase (430 aa).

Residue lysine 265 is modified to N6-(pyridoxal phosphate)lysine.

Belongs to the class-III pyridoxal-phosphate-dependent aminotransferase family. HemL subfamily. As to quaternary structure, homodimer. Requires pyridoxal 5'-phosphate as cofactor.

It localises to the cytoplasm. It catalyses the reaction (S)-4-amino-5-oxopentanoate = 5-aminolevulinate. The protein operates within porphyrin-containing compound metabolism; protoporphyrin-IX biosynthesis; 5-aminolevulinate from L-glutamyl-tRNA(Glu): step 2/2. The protein is Glutamate-1-semialdehyde 2,1-aminomutase (hemL) of Helicobacter pylori (strain ATCC 700392 / 26695) (Campylobacter pylori).